We begin with the raw amino-acid sequence, 485 residues long: Glycogen synthase (485 aa).

Lysine 21 lines the ADP-alpha-D-glucose pocket.

This sequence belongs to the glycosyltransferase 1 family. Bacterial/plant glycogen synthase subfamily.

It carries out the reaction [(1-&gt;4)-alpha-D-glucosyl](n) + ADP-alpha-D-glucose = [(1-&gt;4)-alpha-D-glucosyl](n+1) + ADP + H(+). It participates in glycan biosynthesis; glycogen biosynthesis. Its function is as follows. Synthesizes alpha-1,4-glucan chains using ADP-glucose. This is Glycogen synthase from Pseudomonas savastanoi pv. phaseolicola (strain 1448A / Race 6) (Pseudomonas syringae pv. phaseolicola (strain 1448A / Race 6)).